Reading from the N-terminus, the 168-residue chain is Pheromone-binding protein (168 aa).

Residues 1–26 (MNKTTTKMKVAVVAIVVYLAVGNVDS) form the signal peptide. Disulfide bonds link Cys-45-Cys-80, Cys-76-Cys-134, and Cys-123-Cys-143.

It belongs to the PBP/GOBP family. As to quaternary structure, homodimer. Antenna.

In terms of biological role, this major soluble protein in olfactory sensilla of male moths might serve to solubilize the extremely hydrophobic pheromone molecules and to transport pheromone through the aqueous lymph to receptors located on olfactory cilia. PBP is also found in sensilla from female M.sexta antennae. The sequence is that of Pheromone-binding protein from Manduca sexta (Tobacco hawkmoth).